Here is a 693-residue protein sequence, read N- to C-terminus: Elongation factor G (693 aa).

The region spanning 7–282 (EKIRNIGITA…SVIDYLPAPT (276 aa)) is the tr-type G domain. GTP contacts are provided by residues 16–23 (AHIDAGKT), 80–84 (DTPGH), and 134–137 (NKLD).

It belongs to the TRAFAC class translation factor GTPase superfamily. Classic translation factor GTPase family. EF-G/EF-2 subfamily.

Its subcellular location is the cytoplasm. In terms of biological role, catalyzes the GTP-dependent ribosomal translocation step during translation elongation. During this step, the ribosome changes from the pre-translocational (PRE) to the post-translocational (POST) state as the newly formed A-site-bound peptidyl-tRNA and P-site-bound deacylated tRNA move to the P and E sites, respectively. Catalyzes the coordinated movement of the two tRNA molecules, the mRNA and conformational changes in the ribosome. This is Elongation factor G from Granulibacter bethesdensis (strain ATCC BAA-1260 / CGDNIH1).